Consider the following 365-residue polypeptide: Carbamoyl phosphate synthase small chain (365 aa).

2 CPSase regions span residues 1–166 and 1–169; these read MKRQ…PSPG and MKRQ…GRGH. 3 residues coordinate L-glutamine: S45, G218, and G220. Positions 170–357 constitute a Glutamine amidotransferase type-1 domain; that stretch reads RVVLVDFGMK…LTMIENFKKE (188 aa). The active-site Nucleophile is C245. L-glutamine contacts are provided by L246, Q249, N287, G289, and Y290. Catalysis depends on residues H330 and E332.

This sequence belongs to the CarA family. Composed of two chains; the small (or glutamine) chain promotes the hydrolysis of glutamine to ammonia, which is used by the large (or ammonia) chain to synthesize carbamoyl phosphate. Tetramer of heterodimers (alpha,beta)4.

The enzyme catalyses hydrogencarbonate + L-glutamine + 2 ATP + H2O = carbamoyl phosphate + L-glutamate + 2 ADP + phosphate + 2 H(+). It catalyses the reaction L-glutamine + H2O = L-glutamate + NH4(+). The protein operates within amino-acid biosynthesis; L-arginine biosynthesis; carbamoyl phosphate from bicarbonate: step 1/1. Its pathway is pyrimidine metabolism; UMP biosynthesis via de novo pathway; (S)-dihydroorotate from bicarbonate: step 1/3. Small subunit of the glutamine-dependent carbamoyl phosphate synthetase (CPSase). CPSase catalyzes the formation of carbamoyl phosphate from the ammonia moiety of glutamine, carbonate, and phosphate donated by ATP, constituting the first step of 2 biosynthetic pathways, one leading to arginine and/or urea and the other to pyrimidine nucleotides. The small subunit (glutamine amidotransferase) binds and cleaves glutamine to supply the large subunit with the substrate ammonia. The chain is Carbamoyl phosphate synthase small chain from Bacillus cereus (strain ZK / E33L).